We begin with the raw amino-acid sequence, 74 residues long: NADH dehydrogenase [ubiquinone] 1 alpha subcomplex assembly factor 8 (74 aa).

The CHCH domain maps to 22-69 (LAACGAEASAYGKCVQASTAPGGRLSKDLCVREFEALRSCFAAAAKKT). Short sequence motifs (cx9C motif) lie at residues 25–35 (CGAEASAYGKC) and 51–61 (CVREFEALRSC). Disulfide bonds link C25–C61 and C35–C51.

As to quaternary structure, interacts with NDUFAF5.

The protein resides in the mitochondrion. Its function is as follows. Involved in the assembly of mitochondrial NADH:ubiquinone oxidoreductase complex (complex I, MT-ND1). Required to stabilize NDUFAF5. This is NADH dehydrogenase [ubiquinone] 1 alpha subcomplex assembly factor 8 from Mus musculus (Mouse).